Here is a 136-residue protein sequence, read N- to C-terminus: Phosphoribosyl-AMP cyclohydrolase (136 aa).

Mg(2+) is bound at residue D89. C90 contributes to the Zn(2+) binding site. Positions 91 and 93 each coordinate Mg(2+). Residues C106 and C113 each contribute to the Zn(2+) site.

The protein belongs to the PRA-CH family. Homodimer. It depends on Mg(2+) as a cofactor. Zn(2+) serves as cofactor.

Its subcellular location is the cytoplasm. It catalyses the reaction 1-(5-phospho-beta-D-ribosyl)-5'-AMP + H2O = 1-(5-phospho-beta-D-ribosyl)-5-[(5-phospho-beta-D-ribosylamino)methylideneamino]imidazole-4-carboxamide. Its pathway is amino-acid biosynthesis; L-histidine biosynthesis; L-histidine from 5-phospho-alpha-D-ribose 1-diphosphate: step 3/9. In terms of biological role, catalyzes the hydrolysis of the adenine ring of phosphoribosyl-AMP. In Bifidobacterium longum subsp. infantis (strain ATCC 15697 / DSM 20088 / JCM 1222 / NCTC 11817 / S12), this protein is Phosphoribosyl-AMP cyclohydrolase.